We begin with the raw amino-acid sequence, 382 residues long: L-arabinitol 4-dehydrogenase (382 aa).

Cys55, His80, Glu81, Cys110, Cys113, Cys116, Cys124, and Glu165 together coordinate Zn(2+). NAD(+) is bound by residues 192-193, Asp213, Arg218, Ile293, and 317-319; these read PI and QYR.

Belongs to the zinc-containing alcohol dehydrogenase family. In terms of assembly, homotetramer. Zn(2+) serves as cofactor.

The enzyme catalyses L-arabinitol + NAD(+) = L-xylulose + NADH + H(+). It participates in carbohydrate degradation; L-arabinose degradation via L-arabinitol; D-xylulose 5-phosphate from L-arabinose (fungal route): step 2/5. Its function is as follows. Catalyzes the NAD-dependent oxidation of L-arabinitol to L-xylulose in the fungal L-arabinose catabolic pathway. L-arabinose catabolism is important for using plant material as a carbon source. Also active on ribitol and xylitol. Not active with NADP as cosubstrate. In Aspergillus oryzae (Yellow koji mold), this protein is L-arabinitol 4-dehydrogenase (ladA).